A 274-amino-acid chain; its full sequence is Bis(5'-nucleosyl)-tetraphosphatase, symmetrical (274 aa).

The protein belongs to the Ap4A hydrolase family.

It catalyses the reaction P(1),P(4)-bis(5'-adenosyl) tetraphosphate + H2O = 2 ADP + 2 H(+). Functionally, hydrolyzes diadenosine 5',5'''-P1,P4-tetraphosphate to yield ADP. The polypeptide is Bis(5'-nucleosyl)-tetraphosphatase, symmetrical (Shewanella baltica (strain OS195)).